Reading from the N-terminus, the 264-residue chain is Acyl-[acyl-carrier-protein]--UDP-N-acetylglucosamine O-acyltransferase (264 aa).

The protein belongs to the transferase hexapeptide repeat family. LpxA subfamily. Homotrimer.

The protein localises to the cytoplasm. The catalysed reaction is a (3R)-hydroxyacyl-[ACP] + UDP-N-acetyl-alpha-D-glucosamine = a UDP-3-O-[(3R)-3-hydroxyacyl]-N-acetyl-alpha-D-glucosamine + holo-[ACP]. It functions in the pathway glycolipid biosynthesis; lipid IV(A) biosynthesis; lipid IV(A) from (3R)-3-hydroxytetradecanoyl-[acyl-carrier-protein] and UDP-N-acetyl-alpha-D-glucosamine: step 1/6. Involved in the biosynthesis of lipid A, a phosphorylated glycolipid that anchors the lipopolysaccharide to the outer membrane of the cell. The chain is Acyl-[acyl-carrier-protein]--UDP-N-acetylglucosamine O-acyltransferase from Leptothrix cholodnii (strain ATCC 51168 / LMG 8142 / SP-6) (Leptothrix discophora (strain SP-6)).